A 233-amino-acid chain; its full sequence is Lipoprotein-releasing system ATP-binding protein LolD (233 aa).

One can recognise an ABC transporter domain in the interval Ile7–His233. Gly43 to Ser50 contacts ATP.

Belongs to the ABC transporter superfamily. Lipoprotein translocase (TC 3.A.1.125) family. As to quaternary structure, the complex is composed of two ATP-binding proteins (LolD) and two transmembrane proteins (LolC and LolE).

The protein localises to the cell inner membrane. Its function is as follows. Part of the ABC transporter complex LolCDE involved in the translocation of mature outer membrane-directed lipoproteins, from the inner membrane to the periplasmic chaperone, LolA. Responsible for the formation of the LolA-lipoprotein complex in an ATP-dependent manner. The protein is Lipoprotein-releasing system ATP-binding protein LolD of Coxiella burnetii (strain RSA 493 / Nine Mile phase I).